An 829-amino-acid polypeptide reads, in one-letter code: Periplasmic nitrate reductase (829 aa).

The tat-type signal signal peptide spans 1–30; sequence MKMTRRAFVKANAAASAAAVAGITLPASAA. The 57-residue stretch at 41–97 folds into the 4Fe-4S Mo/W bis-MGD-type domain; sequence ITWDKAPCRFCGTGCSVLVGTQNGKVVATQGDPEAPVNKGLNCIKGYFLSKIMYGQD. Positions 48, 51, 55, and 83 each coordinate [4Fe-4S] cluster. Mo-bis(molybdopterin guanine dinucleotide) contacts are provided by residues lysine 85, glutamine 152, asparagine 177, cysteine 181, 214–221, 245–249, 264–266, methionine 374, glutamine 378, asparagine 484, 510–511, lysine 533, aspartate 560, and 718–727; these read WGSNMAEM, STYYH, QSD, SD, and TGRVLEHWHT. Phenylalanine 794 provides a ligand contact to substrate. Asparagine 802 and lysine 819 together coordinate Mo-bis(molybdopterin guanine dinucleotide).

The protein belongs to the prokaryotic molybdopterin-containing oxidoreductase family. NasA/NapA/NarB subfamily. Component of the periplasmic nitrate reductase NapAB complex composed of NapA and NapB. [4Fe-4S] cluster serves as cofactor. It depends on Mo-bis(molybdopterin guanine dinucleotide) as a cofactor. Predicted to be exported by the Tat system. The position of the signal peptide cleavage has not been experimentally proven.

The protein localises to the periplasm. It catalyses the reaction 2 Fe(II)-[cytochrome] + nitrate + 2 H(+) = 2 Fe(III)-[cytochrome] + nitrite + H2O. In terms of biological role, catalytic subunit of the periplasmic nitrate reductase complex NapAB. Receives electrons from NapB and catalyzes the reduction of nitrate to nitrite. This Vibrio vulnificus (strain CMCP6) protein is Periplasmic nitrate reductase.